We begin with the raw amino-acid sequence, 26 residues long: Conotoxin Eb6.18 (26 aa).

Cystine bridges form between C7-C18 and C13-C25.

The protein belongs to the conotoxin O1 superfamily. As to expression, expressed by the venom duct.

It localises to the secreted. The chain is Conotoxin Eb6.18 (E1) from Conus ebraeus (Hebrew cone).